Reading from the N-terminus, the 62-residue chain is Short neurotoxin 3 (62 aa).

4 cysteine pairs are disulfide-bonded: Cys3-Cys24, Cys17-Cys41, Cys43-Cys54, and Cys55-Cys60.

This sequence belongs to the three-finger toxin family. Short-chain subfamily. Type I alpha-neurotoxin sub-subfamily. As to expression, expressed by the venom gland.

It localises to the secreted. In terms of biological role, binds to muscle nicotinic acetylcholine receptor (nAChR) and inhibit acetylcholine from binding to the receptor, thereby impairing neuromuscular transmission. This is Short neurotoxin 3 from Naja mossambica (Mozambique spitting cobra).